Consider the following 415-residue polypeptide: Serine/threonine transporter SstT (415 aa).

A run of 8 helical transmembrane segments spans residues 23–43 (ILVG…AAIA), 47–67 (LGTL…LMLV), 85–105 (ILWL…LFSF), 144–164 (ALLK…GFAL), 181–201 (AVTF…FGLV), 220–240 (LMVL…LIVF), 303–323 (GAAI…GIAV), and 333–353 (VVAS…LLLI).

Belongs to the dicarboxylate/amino acid:cation symporter (DAACS) (TC 2.A.23) family.

It localises to the cell inner membrane. It catalyses the reaction L-serine(in) + Na(+)(in) = L-serine(out) + Na(+)(out). The enzyme catalyses L-threonine(in) + Na(+)(in) = L-threonine(out) + Na(+)(out). Its function is as follows. Involved in the import of serine and threonine into the cell, with the concomitant import of sodium (symport system). This Cronobacter sakazakii (strain ATCC BAA-894) (Enterobacter sakazakii) protein is Serine/threonine transporter SstT.